The chain runs to 719 residues: DNA ligase (719 aa).

NAD(+) contacts are provided by residues 42-46, 92-93, and glutamate 126; these read DAAYD and SL. The N6-AMP-lysine intermediate role is filled by lysine 128. Positions 149, 185, 301, and 325 each coordinate NAD(+). Zn(2+)-binding residues include cysteine 430, cysteine 433, cysteine 448, and cysteine 454. A BRCT domain is found at 640 to 719; sequence ATGSPVEGKT…DDWFKLVGED (80 aa).

Belongs to the NAD-dependent DNA ligase family. LigA subfamily. Mg(2+) is required as a cofactor. Requires Mn(2+) as cofactor.

The enzyme catalyses NAD(+) + (deoxyribonucleotide)n-3'-hydroxyl + 5'-phospho-(deoxyribonucleotide)m = (deoxyribonucleotide)n+m + AMP + beta-nicotinamide D-nucleotide.. DNA ligase that catalyzes the formation of phosphodiester linkages between 5'-phosphoryl and 3'-hydroxyl groups in double-stranded DNA using NAD as a coenzyme and as the energy source for the reaction. It is essential for DNA replication and repair of damaged DNA. The sequence is that of DNA ligase from Brucella melitensis biotype 2 (strain ATCC 23457).